Reading from the N-terminus, the 101-residue chain is Small ribosomal subunit protein bS18c (101 aa).

The segment covering 1-19 (MDKSKQPFRKSKRSFRRRL) has biased composition (basic residues). A disordered region spans residues 1 to 26 (MDKSKQPFRKSKRSFRRRLPPIGSGD).

Belongs to the bacterial ribosomal protein bS18 family. Part of the 30S ribosomal subunit.

The protein resides in the plastid. Its subcellular location is the chloroplast. The sequence is that of Small ribosomal subunit protein bS18c from Phalaenopsis aphrodite subsp. formosana (Moth orchid).